Consider the following 343-residue polypeptide: MSRAGSWDMDGLRADGGGAGGAPASSSSSSVAAAAASGQCRGFLSAPVFAGTHSGRAAAAAAAAAAAAAAASGFAYPGTSERTGSSSSSSSSAVVAARPEAPPAKECPAPTPAAAAAAPPSAPALGYGYHFGNGYYSCRMSHGVGLQQNALKSSPHASLGGFPVEKYMDVSGLASSSVPANEVPARAKEVSFYQGYTSPYQHVPGYIDMVSTFGSGEPRHEAYISMEGYQSWTLANGWNSQVYCTKDQPQGSHFWKSSFPGDVALNQPDMCVYRRGRKKRVPYTKLQLKELENEYAINKFINKDKRRRISAATNLSERQVTIWFQNRRVKDKKIVSKLKDTVS.

2 disordered regions span residues 1-28 and 78-115; these read MSRA…SSSS and GTSE…PAAA. Positions 85-115 are enriched in low complexity; it reads SSSSSSSSAVVAARPEAPPAKECPAPTPAAA. Residues 276–335 constitute a DNA-binding region (homeobox); it reads GRKKRVPYTKLQLKELENEYAINKFINKDKRRRISAATNLSERQVTIWFQNRRVKDKKIV.

This sequence belongs to the Abd-B homeobox family.

It is found in the nucleus. Its function is as follows. Sequence-specific transcription factor that binds gene promoters and activates their transcription. Part of a developmental regulatory system that provides cells with specific positional identities on the anterior-posterior axis. The chain is Homeobox protein Hox-D13 (HOXD13) from Homo sapiens (Human).